We begin with the raw amino-acid sequence, 688 residues long: Translation initiation factor IF-2 (688 aa).

The interval 54-95 (KEKSEKTKEEDDEIETTAKNPIKESTNNKKPNKRDDKNEKVN) is disordered. The span at 86–95 (KRDDKNEKVN) shows a compositional bias: basic and acidic residues. A tr-type G domain is found at 187 to 354 (KRSPIITVMG…MILLSSEILE (168 aa)). Positions 196–203 (GHVDHGKT) are G1. 196–203 (GHVDHGKT) is a binding site for GTP. A G2 region spans residues 221–225 (GITQH). A G3 region spans residues 242 to 245 (DTPG). GTP contacts are provided by residues 242 to 246 (DTPGH) and 296 to 299 (NKID). Positions 296 to 299 (NKID) are G4. The interval 332 to 334 (SAH) is G5.

This sequence belongs to the TRAFAC class translation factor GTPase superfamily. Classic translation factor GTPase family. IF-2 subfamily.

Its subcellular location is the cytoplasm. In terms of biological role, one of the essential components for the initiation of protein synthesis. Protects formylmethionyl-tRNA from spontaneous hydrolysis and promotes its binding to the 30S ribosomal subunits. Also involved in the hydrolysis of GTP during the formation of the 70S ribosomal complex. The chain is Translation initiation factor IF-2 from Clostridium botulinum (strain Okra / Type B1).